Here is a 45-residue protein sequence, read N- to C-terminus: Large ribosomal subunit protein bL34 (45 aa).

Positions 1–45 are disordered; it reads MTKRTFGGTSRKRKRVSGFRVRMRSHTGRRVIKSRRKRGRERIAV. Over residues 10–45 the composition is skewed to basic residues; sequence SRKRKRVSGFRVRMRSHTGRRVIKSRRKRGRERIAV.

The protein belongs to the bacterial ribosomal protein bL34 family.

The polypeptide is Large ribosomal subunit protein bL34 (Prochlorococcus marinus subsp. pastoris (strain CCMP1986 / NIES-2087 / MED4)).